Here is a 482-residue protein sequence, read N- to C-terminus: Glutamate--tRNA ligase (482 aa).

Residues 9 to 19 carry the 'HIGH' region motif; sequence PSPTGPIHVGN. Zn(2+) is bound by residues Cys106, Cys108, Cys133, and Asp135. A 'KMSKS' region motif is present at residues 250–254; it reads KLSKR. Lys253 is a binding site for ATP.

The protein belongs to the class-I aminoacyl-tRNA synthetase family. Glutamate--tRNA ligase type 1 subfamily. Monomer. It depends on Zn(2+) as a cofactor.

The protein resides in the cytoplasm. It carries out the reaction tRNA(Glu) + L-glutamate + ATP = L-glutamyl-tRNA(Glu) + AMP + diphosphate. Functionally, catalyzes the attachment of glutamate to tRNA(Glu) in a two-step reaction: glutamate is first activated by ATP to form Glu-AMP and then transferred to the acceptor end of tRNA(Glu). The sequence is that of Glutamate--tRNA ligase from Symbiobacterium thermophilum (strain DSM 24528 / JCM 14929 / IAM 14863 / T).